The following is a 375-amino-acid chain: Beta-1,3-N-acetylglucosaminyltransferase lunatic fringe (375 aa).

The Cytoplasmic segment spans residues 1-8 (MLKNWGKK). The chain crosses the membrane as a helical; Signal-anchor for type II membrane protein span at residues 9-29 (LLLSIVGATLTCLLVLVVDQQ). Over 30–375 (SRHMLETQSD…TPWCPWKAAY (346 aa)) the chain is Lumenal. The interval 53-73 (DLDPANPGDGGDPANSAQDSG) is disordered. Arg-125 is a substrate binding site. N-linked (GlcNAc...) asparagine glycosylation occurs at Asn-163. Disulfide bonds link Cys-164–Cys-175 and Cys-193–Cys-256. Asp-197 contributes to the substrate binding site. Asp-198 lines the Mn(2+) pocket. Residue Asp-286 is part of the active site. A Mn(2+)-binding site is contributed by His-310. Residues Cys-360 and Cys-369 are joined by a disulfide bond.

The protein belongs to the glycosyltransferase 31 family. It depends on Mn(2+) as a cofactor. Co(2+) is required as a cofactor. A soluble form may be derived from the membrane form by proteolytic processing. Detected in the neural tube, the eye and the otic vesicle, expression coincides with the region that produces the medial, intermediate and lateral neurons.

It localises to the golgi apparatus membrane. The enzyme catalyses 3-O-(alpha-L-fucosyl)-L-threonyl-[EGF-like domain protein] + UDP-N-acetyl-alpha-D-glucosamine = 3-O-(N-acetyl-beta-D-glucosaminyl-(1-&gt;3)-alpha-L-fucosyl)-L-threonyl-[EGF-like domain protein] + UDP + H(+). It carries out the reaction 3-O-(alpha-L-fucosyl)-L-seryl-[EGF-like domain protein] + UDP-N-acetyl-alpha-D-glucosamine = 3-O-(N-acetyl-beta-D-glucosaminyl-(1-&gt;3)-alpha-L-fucosyl)-L-seryl-[EGF-like domain protein] + UDP + H(+). Its function is as follows. Glycosyltransferase that initiates the elongation of O-linked fucose residues attached to EGF-like repeats in the extracellular domain of Notch molecules. Essential mediator of somite segmentation and patterning. May be involved in mesoderm development. The sequence is that of Beta-1,3-N-acetylglucosaminyltransferase lunatic fringe (lfng) from Xenopus laevis (African clawed frog).